The sequence spans 2415 residues: Spectrin alpha chain (2415 aa).

Spectrin repeat units follow at residues 48–150 (RFQY…KLQQ), 154–254 (LVQF…QEKL), 258–362 (HEIQ…KLDE), 366–464 (LHRF…DRRI), 471–574 (DLQL…LLED), 577–679 (RYQQ…KLNE), 683–784 (QQQF…QHLL), 788–890 (QVQQ…QDLD), and 894–963 (QAHQ…RQQE). The 60-residue stretch at 970–1029 (TGKECVVALYDYTEKSPREVSMKKGDVLTLLNSNNKDWWKVEVNDRQGFVPAAYIKKIDA) folds into the SH3 domain. Phosphoserine is present on residues Ser1032 and Ser1034. Spectrin repeat units lie at residues 1079–1177 (VREA…ASQL), 1181–1284 (HEVQ…EKLL), 1287–1391 (YDLQ…QLEQ), 1394–1496 (DLQL…SRLG), 1500–1604 (TLQQ…KLKE), 1608–1710 (QRTY…RLNE), 1714–1816 (LHQF…KLDE), 1820–1921 (YQQF…GALL), 1926–2028 (YLQF…DRLL), 2040–2141 (LYLT…DGEL), and 2154–2252 (LRKE…NLEQ). 2 consecutive EF-hand domains span residues 2265–2300 (DSLKEFSMMFKHFDKDKSGKLNHQEFKSCLRALGYD) and 2308–2343 (QPDPEFEAILDVVDPNRDGYVSLQEYIAFMISKETE). Positions 2278, 2280, 2282, 2284, 2289, 2321, 2323, 2325, 2327, and 2332 each coordinate Ca(2+).

Belongs to the spectrin family. In terms of assembly, native spectrin molecule is a tetramer composed of two antiparallel heterodimers joined head to head so that each end of the native molecule includes the C-terminus of the alpha subunit and the N-terminus of the beta subunit. Interacts with calmodulin in a calcium-dependent manner, interacts with F-actin and also interacts with Lva. Interacts with Ten-m. In terms of tissue distribution, a substantial pool of maternal protein in the egg undergoes dynamic changes in distribution early in embryogenesis. In gastrulated embryo, the highest level of protein is found in the respiratory tract cells and the lowest in parts of the forming gut.

The protein resides in the cytoplasm. It localises to the cytoskeleton. Its subcellular location is the golgi apparatus. The protein localises to the cell projection. It is found in the cilium. The protein resides in the flagellum. In terms of biological role, spectrin is the major constituent of the cytoskeletal network underlying the erythrocyte plasma membrane. It associates with band 4.1 and actin to form the cytoskeletal superstructure of the erythrocyte plasma membrane. Essential for larval survival and development. Stabilizes cell to cell interactions that are critical for the maintenance of cell shape and subcellular organization within embryonic tissues. Lva and spectrin may form a Golgi-based scaffold that mediates interaction of Golgi bodies with microtubules and facilitates Golgi-derived membrane secretion required for the formation of furrows during cellularization. The chain is Spectrin alpha chain (alpha-Spec) from Drosophila melanogaster (Fruit fly).